The chain runs to 78 residues: Delta-conotoxin-like S6.8 (78 aa).

Residues 1-22 (MKLTCMMIVAVLFLTAWTFVTA) form the signal peptide. Residues 23–53 (DDSRNGLKNLFPKARHEMKNPDASKLNKRDG) constitute a propeptide that is removed on maturation. Disulfide bonds link Cys54–Cys69, Cys61–Cys73, and Cys68–Cys77.

The protein belongs to the conotoxin O1 superfamily. In terms of tissue distribution, expressed by the venom duct.

It localises to the secreted. In terms of biological role, delta-conotoxins bind to site 6 of voltage-gated sodium channels (Nav) and inhibit the inactivation process. The chain is Delta-conotoxin-like S6.8 from Conus striatus (Striated cone).